The primary structure comprises 179 residues: Large ribosomal subunit protein uL5c (179 aa).

It belongs to the universal ribosomal protein uL5 family. Part of the 50S ribosomal subunit; contacts the 5S rRNA.

It is found in the plastid. The protein localises to the organellar chromatophore. Functionally, binds 5S rRNA, forms part of the central protuberance of the 50S subunit. This is Large ribosomal subunit protein uL5c (rpl5) from Paulinella chromatophora.